The chain runs to 245 residues: Eukaryotic translation initiation factor 6 (245 aa).

Phosphotyrosine is present on Tyr-113. Thr-165 is subject to Phosphothreonine. Ser-166 is modified (phosphoserine). A phosphoserine; by CK1 mark is found at Ser-174 and Ser-175. Ser-235 carries the phosphoserine; by PKC modification. Ser-239 and Ser-243 each carry phosphoserine.

It belongs to the eIF-6 family. As to quaternary structure, monomer. Associates with the 60S ribosomal subunit. Interacts with RACK1. Interacts with DICER1, AGO2, TARBP2, MOV10 and RPL7A; they form a large RNA-induced silencing complex (RISC). In terms of processing, phosphorylation at Ser-174 and Ser-175 by CSNK1D/CK1 promotes nuclear export. Post-translationally, ufmylated by UFL1. As to expression, detected in bladder, duodenum, liver, esophagus, pancreas, adipose tissue, megakaryocytes and testis with lower levels in muscle (at protein level).

Its subcellular location is the cytoplasm. The protein localises to the nucleus. It localises to the nucleolus. Binds to the 60S ribosomal subunit and prevents its association with the 40S ribosomal subunit to form the 80S initiation complex in the cytoplasm. Behaves as a stimulatory translation initiation factor downstream insulin/growth factors. Is also involved in ribosome biogenesis. Associates with pre-60S subunits in the nucleus and is involved in its nuclear export. Cytoplasmic release of TIF6 from 60S subunits and nuclear relocalization is promoted by a RACK1 (RACK1)-dependent protein kinase C activity. In tissues responsive to insulin, controls fatty acid synthesis and glycolysis by exerting translational control of adipogenic transcription factors such as CEBPB, CEBPD and ATF4 that have G/C rich or uORF in their 5'UTR. Required for ROS-dependent megakaryocyte maturation and platelets formation, controls the expression of mitochondrial respiratory chain genes involved in reactive oxygen species (ROS) synthesis. Involved in miRNA-mediated gene silencing by the RNA-induced silencing complex (RISC). Required for both miRNA-mediated translational repression and miRNA-mediated cleavage of complementary mRNAs by RISC. Modulates cell cycle progression and global translation of pre-B cells, its activation seems to be rate-limiting in tumorigenesis and tumor growth. The protein is Eukaryotic translation initiation factor 6 (Eif6) of Mus musculus (Mouse).